A 275-amino-acid chain; its full sequence is Formamidopyrimidine-DNA glycosylase (275 aa).

The active-site Schiff-base intermediate with DNA is proline 2. Glutamate 3 acts as the Proton donor in catalysis. Catalysis depends on lysine 58, which acts as the Proton donor; for beta-elimination activity. DNA contacts are provided by histidine 93, arginine 111, and arginine 156. The FPG-type zinc finger occupies 241-275 (FVYDRAGQPCRVCGTPVRQIVQGQRSTYFCPTCQR). Arginine 265 (proton donor; for delta-elimination activity) is an active-site residue.

This sequence belongs to the FPG family. Monomer. The cofactor is Zn(2+).

It carries out the reaction Hydrolysis of DNA containing ring-opened 7-methylguanine residues, releasing 2,6-diamino-4-hydroxy-5-(N-methyl)formamidopyrimidine.. It catalyses the reaction 2'-deoxyribonucleotide-(2'-deoxyribose 5'-phosphate)-2'-deoxyribonucleotide-DNA = a 3'-end 2'-deoxyribonucleotide-(2,3-dehydro-2,3-deoxyribose 5'-phosphate)-DNA + a 5'-end 5'-phospho-2'-deoxyribonucleoside-DNA + H(+). Involved in base excision repair of DNA damaged by oxidation or by mutagenic agents. Acts as a DNA glycosylase that recognizes and removes damaged bases. Has a preference for oxidized purines, such as 7,8-dihydro-8-oxoguanine (8-oxoG). Has AP (apurinic/apyrimidinic) lyase activity and introduces nicks in the DNA strand. Cleaves the DNA backbone by beta-delta elimination to generate a single-strand break at the site of the removed base with both 3'- and 5'-phosphates. The chain is Formamidopyrimidine-DNA glycosylase from Burkholderia cenocepacia (strain HI2424).